Reading from the N-terminus, the 188-residue chain is PRA1 family protein 3 (188 aa).

Methionine 1 carries the post-translational modification N-acetylmethionine. Over 1-35 the chain is Cytoplasmic; the sequence is MDVNIAPLRAWDDFFPGSDRFARPDFRDISKWNNR. Transmembrane regions (helical) follow at residues 36–56 and 57–77; these read VVSNLLYYQTNYLVVAAMMIS and IVGFLSPFNMILGGIVVVLVF. The Cytoplasmic portion of the chain corresponds to 78-93; the sequence is TGFVWAAHNKDVLRRM. The next 2 membrane-spanning stretches (helical) occupy residues 94–114 and 115–135; these read KKRYPTTFVMVVMLASYFLIS and MFGGVMVFVFGITFPLLLMFI. A required for homodimer formation and heterodimer formation with ARL6IP1 region spans residues 103–117; that stretch reads MVVMLASYFLISMFG. The Cytoplasmic portion of the chain corresponds to 136–188; the sequence is HASLRLRNLKNKLENKMEGIGLKRTPMGIVLDALEQQEEGINRLTDYISKVKE. The segment at 136 to 188 is targeting to endoplasmic reticulum membrane; it reads HASLRLRNLKNKLENKMEGIGLKRTPMGIVLDALEQQEEGINRLTDYISKVKE.

This sequence belongs to the PRA1 family. As to quaternary structure, homodimer. Heterodimer with ARL6IP1. Forms multimers. Interacts with ARL6. Interacts with prenylated RAB1A and RAB3A. Interacts with SLC1A1/EAAC1. Interacts with RTN2 (via first transmembrane domain). Does not interact with VAMP1, VAMP2 or VAMP3.

The protein resides in the endoplasmic reticulum membrane. The protein localises to the cell membrane. It is found in the cytoplasm. Its subcellular location is the cytoskeleton. Functionally, regulates intracellular concentrations of taurine and glutamate. Negatively modulates SLC1A1/EAAC1 glutamate transport activity by decreasing its affinity for glutamate in a PKC activity-dependent manner. Plays a role in the retention of SLC1A1/EAAC1 in the endoplasmic reticulum. The sequence is that of PRA1 family protein 3 (ARL6IP5) from Homo sapiens (Human).